A 652-amino-acid polypeptide reads, in one-letter code: DNA ligase (652 aa).

Residues Asp29–Asp33, Ser78–Leu79, and Glu107 each bind NAD(+). Lys109 functions as the N6-AMP-lysine intermediate in the catalytic mechanism. Arg130, Glu164, Lys278, and Lys302 together coordinate NAD(+). Residues Cys395, Cys398, Cys413, and Cys418 each coordinate Zn(2+). The BRCT domain occupies Val577–Leu652.

The protein belongs to the NAD-dependent DNA ligase family. LigA subfamily. Mg(2+) serves as cofactor. The cofactor is Mn(2+).

The catalysed reaction is NAD(+) + (deoxyribonucleotide)n-3'-hydroxyl + 5'-phospho-(deoxyribonucleotide)m = (deoxyribonucleotide)n+m + AMP + beta-nicotinamide D-nucleotide.. In terms of biological role, DNA ligase that catalyzes the formation of phosphodiester linkages between 5'-phosphoryl and 3'-hydroxyl groups in double-stranded DNA using NAD as a coenzyme and as the energy source for the reaction. It is essential for DNA replication and repair of damaged DNA. The sequence is that of DNA ligase from Streptococcus pneumoniae (strain CGSP14).